Reading from the N-terminus, the 729-residue chain is Fatty acid oxidation complex subunit alpha (729 aa).

Residues 1–189 (MLYKGDTLYL…KIGLVDGVVK (189 aa)) are enoyl-CoA hydratase/isomerase. Position 296 (D296) interacts with substrate. The 3-hydroxyacyl-CoA dehydrogenase stretch occupies residues 311 to 729 (ETPKQAAVLG…ARPVGSLKTA (419 aa)). Residues M324, D343, 400–402 (VVE), K407, and S429 each bind NAD(+). H450 acts as the For 3-hydroxyacyl-CoA dehydrogenase activity in catalysis. Residue N453 coordinates NAD(+). Substrate-binding residues include N500 and Y660. The disordered stretch occupies residues 708–729 (RHNEPYYPPVEPARPVGSLKTA).

The protein in the N-terminal section; belongs to the enoyl-CoA hydratase/isomerase family. This sequence in the C-terminal section; belongs to the 3-hydroxyacyl-CoA dehydrogenase family. As to quaternary structure, heterotetramer of two alpha chains (FadB) and two beta chains (FadA).

The catalysed reaction is a (3S)-3-hydroxyacyl-CoA + NAD(+) = a 3-oxoacyl-CoA + NADH + H(+). It catalyses the reaction a (3S)-3-hydroxyacyl-CoA = a (2E)-enoyl-CoA + H2O. It carries out the reaction a 4-saturated-(3S)-3-hydroxyacyl-CoA = a (3E)-enoyl-CoA + H2O. The enzyme catalyses (3S)-3-hydroxybutanoyl-CoA = (3R)-3-hydroxybutanoyl-CoA. The catalysed reaction is a (3Z)-enoyl-CoA = a 4-saturated (2E)-enoyl-CoA. It catalyses the reaction a (3E)-enoyl-CoA = a 4-saturated (2E)-enoyl-CoA. The protein operates within lipid metabolism; fatty acid beta-oxidation. Functionally, involved in the aerobic and anaerobic degradation of long-chain fatty acids via beta-oxidation cycle. Catalyzes the formation of 3-oxoacyl-CoA from enoyl-CoA via L-3-hydroxyacyl-CoA. It can also use D-3-hydroxyacyl-CoA and cis-3-enoyl-CoA as substrate. In Salmonella choleraesuis (strain SC-B67), this protein is Fatty acid oxidation complex subunit alpha.